Here is a 544-residue protein sequence, read N- to C-terminus: Chaperonin GroEL 2 (544 aa).

Residues Thr-29 to Pro-32, Asp-86 to Thr-90, Gly-413, Asn-479 to Ala-481, and Asp-495 each bind ATP.

This sequence belongs to the chaperonin (HSP60) family. As to quaternary structure, forms a cylinder of 14 subunits composed of two heptameric rings stacked back-to-back. Interacts with the co-chaperonin GroES.

The protein resides in the cytoplasm. The enzyme catalyses ATP + H2O + a folded polypeptide = ADP + phosphate + an unfolded polypeptide.. Its function is as follows. Together with its co-chaperonin GroES, plays an essential role in assisting protein folding. The GroEL-GroES system forms a nano-cage that allows encapsulation of the non-native substrate proteins and provides a physical environment optimized to promote and accelerate protein folding. The polypeptide is Chaperonin GroEL 2 (Trichodesmium erythraeum (strain IMS101)).